The chain runs to 272 residues: Insulin-like growth factor-binding protein 1 (272 aa).

The first 25 residues, 1-25 (MPEFLTVVSWPFLILLSFQIGVAAG), serve as a signal peptide directing secretion. One can recognise an IGFBP N-terminal domain in the interval 28 to 109 (QPWHCAPCTA…TRGQGACVPE (82 aa)). 6 disulfides stabilise this stretch: Cys-32–Cys-59, Cys-35–Cys-61, Cys-43–Cys-62, Cys-50–Cys-65, Cys-73–Cys-86, and Cys-80–Cys-106. Phosphoserine is present on residues Ser-139, Ser-157, and Ser-169. A Phosphothreonine modification is found at Thr-170. Tyr-171 is subject to Phosphotyrosine. A Thyroglobulin type-1 domain is found at 186-264 (KEPCQRELYK…SLETRGDPNC (79 aa)). Disulfide bonds link Cys-189/Cys-219, Cys-230/Cys-241, and Cys-243/Cys-264. The residue at position 255 (Ser-255) is a Phosphoserine. The Cell attachment site motif lies at 259–261 (RGD).

Binds equally well IGF1 and IGF2. Interacts with integrin ITGA5:ITGB1. Interacts with VHL; this interaction inhibits HIF1A degradation.

Its subcellular location is the secreted. Multifunctional protein that plays a critical role in regulating the availability of IGFs such as IGF1 and IGF2 to their receptors and thereby regulates IGF-mediated cellular processes including cell migration, proliferation, differentiation or apoptosis in a cell-type specific manner. Also plays a positive role in cell migration by interacting with integrin ITGA5:ITGB1 through its RGD motif. Mechanistically, binding to integrins leads to activation of focal adhesion kinase/PTK2 and stimulation of the mitogen-activated protein kinase (MAPK) pathway. Regulates cardiomyocyte apoptosis by suppressing HIF-1alpha/HIF1A ubiquitination and subsequent degradation. The sequence is that of Insulin-like growth factor-binding protein 1 (Igfbp1) from Mus musculus (Mouse).